A 63-amino-acid chain; its full sequence is Small ribosomal subunit protein eS30B (63 aa).

Residues 1–35 (MAKVHGSLARAGKVKSQTPKVEKTEKPKKPKGRAY) form a disordered region. Ser16 is modified (phosphoserine). At Thr48 the chain carries Phosphothreonine.

Belongs to the eukaryotic ribosomal protein eS30 family. In terms of assembly, component of the small ribosomal subunit (SSU). Mature yeast ribosomes consist of a small (40S) and a large (60S) subunit. The 40S small subunit contains 1 molecule of ribosomal RNA (18S rRNA) and 33 different proteins (encoded by 57 genes). The large 60S subunit contains 3 rRNA molecules (25S, 5.8S and 5S rRNA) and 46 different proteins (encoded by 81 genes).

The protein localises to the cytoplasm. Its function is as follows. Component of the ribosome, a large ribonucleoprotein complex responsible for the synthesis of proteins in the cell. The small ribosomal subunit (SSU) binds messenger RNAs (mRNAs) and translates the encoded message by selecting cognate aminoacyl-transfer RNA (tRNA) molecules. The large subunit (LSU) contains the ribosomal catalytic site termed the peptidyl transferase center (PTC), which catalyzes the formation of peptide bonds, thereby polymerizing the amino acids delivered by tRNAs into a polypeptide chain. The nascent polypeptides leave the ribosome through a tunnel in the LSU and interact with protein factors that function in enzymatic processing, targeting, and the membrane insertion of nascent chains at the exit of the ribosomal tunnel. This is Small ribosomal subunit protein eS30B from Saccharomyces cerevisiae (strain ATCC 204508 / S288c) (Baker's yeast).